A 619-amino-acid chain; its full sequence is Trihelix transcription factor GTL2 (619 aa).

Disordered stretches follow at residues 11 to 41 (HRFI…VSFS) and 62 to 100 (HHHH…HHHH). Residues 16 to 27 (SPPPPPPLPPHQ) show a composition bias toward pro residues. The Myb-like 1 domain maps to 102-154 (PWCSDEVLALLRFRSTVENWFPEFTWEHTSRKLAEVGFKRSPQECKEKFEEEE). A coiled-coil region spans residues 307–361 (VRNMIAQQEEMHKKLLEDMVKKEEEKIAREEAWKKQEIERVNKEVEIRAQEQAMA). Disordered stretches follow at residues 382-414 (VVQN…SSLL) and 434-458 (STKT…DLGK). The span at 384–396 (QNPTSPSQDSSSL) shows a compositional bias: polar residues. Residues 435-444 (TKTLKPKNQN) are compositionally biased toward low complexity. Basic and acidic residues predominate over residues 448–458 (PKSDDKSDLGK). One can recognise a Myb-like 2 domain in the interval 459-526 (RWPKDEVLAL…RCKEKWENIN (68 aa)). Positions 503–510 (SKKMLEIG) match the Nuclear localization signal motif. The tract at residues 557–619 (SQPPTGTTAT…VQFSGFDLEF (63 aa)) is disordered. The segment covering 561 to 574 (TGTTATTATTATSA) has biased composition (low complexity). The segment covering 575–585 (RDLDTRPEENR) has biased composition (basic and acidic residues).

Its subcellular location is the nucleus. Its function is as follows. Probable transcription factor that binds specific DNA sequence. The polypeptide is Trihelix transcription factor GTL2 (Arabidopsis thaliana (Mouse-ear cress)).